Here is a 74-residue protein sequence, read N- to C-terminus: Cytochrome c oxidase subunit 6C (74 aa).

The Mitochondrial matrix segment spans residues 2–12 (STALAKPQMRG). Residues 13 to 53 (LLARRLRFHIVGAFMVSLGFATFYKFAVAEKRKKAYADFYR) traverse the membrane as a helical segment. The Mitochondrial intermembrane portion of the chain corresponds to 54–74 (NYDSMKDFEEMRKAGIFQSAK).

The protein belongs to the cytochrome c oxidase subunit 6c family. In terms of assembly, component of the cytochrome c oxidase (complex IV, CIV), a multisubunit enzyme composed of 14 subunits. The complex is composed of a catalytic core of 3 subunits MT-CO1, MT-CO2 and MT-CO3, encoded in the mitochondrial DNA, and 11 supernumerary subunits COX4I1 (or COX4I2), COX5A, COX5B, COX6A2 (or COX6A1), COX6B1 (or COX6B2), COX6C, COX7A1 (or COX7A2), COX7B, COX7C, COX8B and NDUFA4, which are encoded in the nuclear genome. The complex exists as a monomer or a dimer and forms supercomplexes (SCs) in the inner mitochondrial membrane with NADH-ubiquinone oxidoreductase (complex I, CI) and ubiquinol-cytochrome c oxidoreductase (cytochrome b-c1 complex, complex III, CIII), resulting in different assemblies (supercomplex SCI(1)III(2)IV(1) and megacomplex MCI(2)III(2)IV(2)).

It localises to the mitochondrion inner membrane. It participates in energy metabolism; oxidative phosphorylation. Functionally, component of the cytochrome c oxidase, the last enzyme in the mitochondrial electron transport chain which drives oxidative phosphorylation. The respiratory chain contains 3 multisubunit complexes succinate dehydrogenase (complex II, CII), ubiquinol-cytochrome c oxidoreductase (cytochrome b-c1 complex, complex III, CIII) and cytochrome c oxidase (complex IV, CIV), that cooperate to transfer electrons derived from NADH and succinate to molecular oxygen, creating an electrochemical gradient over the inner membrane that drives transmembrane transport and the ATP synthase. Cytochrome c oxidase is the component of the respiratory chain that catalyzes the reduction of oxygen to water. Electrons originating from reduced cytochrome c in the intermembrane space (IMS) are transferred via the dinuclear copper A center (CU(A)) of subunit 2 and heme A of subunit 1 to the active site in subunit 1, a binuclear center (BNC) formed by heme A3 and copper B (CU(B)). The BNC reduces molecular oxygen to 2 water molecules using 4 electrons from cytochrome c in the IMS and 4 protons from the mitochondrial matrix. The sequence is that of Cytochrome c oxidase subunit 6C (COX6C) from Bos taurus (Bovine).